The following is a 397-amino-acid chain: Methylthioribose kinase (397 aa).

Residues Asn43, Lys60, and 114–116 each bind ATP; that span reads EDL. Asp232 is a binding site for substrate. 249-251 contributes to the ATP binding site; sequence DPE. Arg340 provides a ligand contact to substrate.

The protein belongs to the methylthioribose kinase family. As to quaternary structure, homodimer.

It carries out the reaction 5-(methylsulfanyl)-D-ribose + ATP = 5-(methylsulfanyl)-alpha-D-ribose 1-phosphate + ADP + H(+). It functions in the pathway amino-acid biosynthesis; L-methionine biosynthesis via salvage pathway; S-methyl-5-thio-alpha-D-ribose 1-phosphate from S-methyl-5'-thioadenosine (hydrolase route): step 2/2. Functionally, catalyzes the phosphorylation of methylthioribose into methylthioribose-1-phosphate. This chain is Methylthioribose kinase, found in Bacillus pumilus (strain SAFR-032).